A 244-amino-acid chain; its full sequence is Acetoacetate decarboxylase (244 aa).

Residue Lys-115 is the Schiff-base intermediate with acetoacetate of the active site.

It belongs to the ADC family. Homododecamer.

It carries out the reaction acetoacetate + H(+) = acetone + CO2. In terms of biological role, catalyzes the conversion of acetoacetate to acetone and carbon dioxide. The polypeptide is Acetoacetate decarboxylase (Clostridium acetobutylicum (strain ATCC 824 / DSM 792 / JCM 1419 / IAM 19013 / LMG 5710 / NBRC 13948 / NRRL B-527 / VKM B-1787 / 2291 / W)).